We begin with the raw amino-acid sequence, 164 residues long: Phosphopantetheine adenylyltransferase (164 aa).

Substrate is bound at residue serine 9. ATP contacts are provided by residues 9-10 and histidine 17; that span reads SF. Substrate is bound by residues lysine 41, alanine 78, and arginine 92. Residues 93–95, glutamate 103, and 128–134 each bind ATP; these read GLR and SRPITAT.

Belongs to the bacterial CoaD family. In terms of assembly, homohexamer. Mg(2+) serves as cofactor.

The protein resides in the cytoplasm. The enzyme catalyses (R)-4'-phosphopantetheine + ATP + H(+) = 3'-dephospho-CoA + diphosphate. Its pathway is cofactor biosynthesis; coenzyme A biosynthesis; CoA from (R)-pantothenate: step 4/5. Its function is as follows. Reversibly transfers an adenylyl group from ATP to 4'-phosphopantetheine, yielding dephospho-CoA (dPCoA) and pyrophosphate. In Allorhizobium ampelinum (strain ATCC BAA-846 / DSM 112012 / S4) (Agrobacterium vitis (strain S4)), this protein is Phosphopantetheine adenylyltransferase.